A 149-amino-acid polypeptide reads, in one-letter code: Large ribosomal subunit protein bL9 (149 aa).

Belongs to the bacterial ribosomal protein bL9 family.

Binds to the 23S rRNA. This Buchnera aphidicola subsp. Cinara cedri (strain Cc) protein is Large ribosomal subunit protein bL9.